A 274-amino-acid polypeptide reads, in one-letter code: 2,3,4,5-tetrahydropyridine-2,6-dicarboxylate N-succinyltransferase (274 aa).

The substrate site is built by R106 and D143.

It belongs to the transferase hexapeptide repeat family. In terms of assembly, homotrimer.

The protein resides in the cytoplasm. It catalyses the reaction (S)-2,3,4,5-tetrahydrodipicolinate + succinyl-CoA + H2O = (S)-2-succinylamino-6-oxoheptanedioate + CoA. Its pathway is amino-acid biosynthesis; L-lysine biosynthesis via DAP pathway; LL-2,6-diaminopimelate from (S)-tetrahydrodipicolinate (succinylase route): step 1/3. In Rickettsia typhi (strain ATCC VR-144 / Wilmington), this protein is 2,3,4,5-tetrahydropyridine-2,6-dicarboxylate N-succinyltransferase.